We begin with the raw amino-acid sequence, 337 residues long: Glucose transporter 2C (337 aa).

The disordered stretch occupies residues 1–22 (MTERRDNVSHAPDAIEGPNDGA). Residues 1–43 (MTERRDNVSHAPDAIEGPNDGAHAEDTSPGFFSLENLGVAQVQ) are Cytoplasmic-facing. The helical transmembrane segment at 44-64 (VVGGTLNGFSIGFVAVYILLY) threads the bilayer. Residues 65–119 (EVATNCSLFKTTEACKAVGSYGCEWKDTEVCSWKKECDSDSDGVNPCESLIGYSS) lie on the Extracellular side of the membrane. N-linked (GlcNAc...) asparagine glycosylation is present at N69. The helical transmembrane segment at 120–140 (LYSGIFASAMIVGSMVGSIIA) threads the bilayer. The Cytoplasmic segment spans residues 141-152 (GKCITMFGLKKS). The helical transmembrane segment at 153–173 (FIIVGVMSVVASALNHISVAT) threads the bilayer. Over 174–175 (NE) the chain is Extracellular. Residues 176–196 (FWVLCAGRVLMGIGLGVVCVI) traverse the membrane as a helical segment. Residues 197-214 (CPMYVNENAHPKLSKVDG) lie on the Cytoplasmic side of the membrane. A helical membrane pass occupies residues 215 to 235 (VLFQVFITFGIMLAAMLGLIL). Residues 236 to 250 (DKTVNYDNDPDMAGR) lie on the Extracellular side of the membrane. The chain crosses the membrane as a helical span at residues 251–271 (FHGFCAVSSVLSVAMFLVGMF). The Cytoplasmic portion of the chain corresponds to 272–300 (LRESTATFSQDDDGKADGGMDPNEYGWGQ). Residues 301 to 321 (MLWPLFMGAVTAGTLQLTGIN) form a helical membrane-spanning segment. Topologically, residues 322-337 (AVMNYAPKITENLGMD) are extracellular.

Belongs to the major facilitator superfamily. Sugar transporter (TC 2.A.1.1) family.

It localises to the membrane. Its function is as follows. Facilitative glucose transporter. The sequence is that of Glucose transporter 2C (THT2C) from Trypanosoma brucei brucei.